Reading from the N-terminus, the 748-residue chain is NAD(P)H-quinone oxidoreductase subunit 5, chloroplastic (748 aa).

The next 16 helical transmembrane spans lie at 9–29, 40–60, 89–109, 125–145, 147–167, 185–205, 219–239, 258–278, 280–300, 327–347, 354–374, 396–416, 425–445, 550–570, 611–631, and 728–748; these read WIIP…LLLF, WSFP…YLSI, IDPL…MVLI, FAYM…SNLI, IYIF…FWFT, GDFG…SFEF, NEVN…GAVA, TPIS…FLVA, LLPL…IGII, LGYM…FHLI, ALLF…VGYS, NAFL…CFWS, WLYS…TAFY, LFPM…GSPF, ATFS…FYKP, and YILL…FVFF.

This sequence belongs to the complex I subunit 5 family. As to quaternary structure, NDH is composed of at least 16 different subunits, 5 of which are encoded in the nucleus.

Its subcellular location is the plastid. It is found in the chloroplast thylakoid membrane. The enzyme catalyses a plastoquinone + NADH + (n+1) H(+)(in) = a plastoquinol + NAD(+) + n H(+)(out). It carries out the reaction a plastoquinone + NADPH + (n+1) H(+)(in) = a plastoquinol + NADP(+) + n H(+)(out). Functionally, NDH shuttles electrons from NAD(P)H:plastoquinone, via FMN and iron-sulfur (Fe-S) centers, to quinones in the photosynthetic chain and possibly in a chloroplast respiratory chain. The immediate electron acceptor for the enzyme in this species is believed to be plastoquinone. Couples the redox reaction to proton translocation, and thus conserves the redox energy in a proton gradient. This is NAD(P)H-quinone oxidoreductase subunit 5, chloroplastic (ndhF) from Cucumis sativus (Cucumber).